Here is a 594-residue protein sequence, read N- to C-terminus: UvrABC system protein C (594 aa).

The region spanning 17–94 is the GIY-YIG domain; that stretch reads LEPGCYLMKD…IKQYQPRYNI (78 aa). The 36-residue stretch at 199–234 folds into the UVR domain; that stretch reads KTILHHLEDRMNKASEQLDFEQAKEYRDMIQHIHNL.

This sequence belongs to the UvrC family. Interacts with UvrB in an incision complex.

The protein resides in the cytoplasm. Its function is as follows. The UvrABC repair system catalyzes the recognition and processing of DNA lesions. UvrC both incises the 5' and 3' sides of the lesion. The N-terminal half is responsible for the 3' incision and the C-terminal half is responsible for the 5' incision. The protein is UvrABC system protein C of Staphylococcus epidermidis (strain ATCC 12228 / FDA PCI 1200).